The chain runs to 570 residues: MDSRTVGILGGGQLGRMIVEAANRLNIKTLILDAPNSPAKQITNASDHVDGSFANKEDIEALAAKCDVMTVEIEHVDVNALKEVQKQFPKLEIYPTPETIGLIQDKYVQKQHLVKNRIPVVPSITVENSKESLIKTGSSLGYPFVLKSRTLAYDGRGNFVVKSEEDIEKGLEFLANRPLYAEKWASFKKELSVMIIRSLDGRVYSYPIVETIHKNNVCHLCYVPARVPDSVQHKAKLMAENAIKSFPGCGIFGVEMFLLDDDSIVLNEIAPRPHNSGHYTINACVVSQFEAHLRAILDLPMPKNFTSLSTNSTNAIMLNLLGDPETKDKELQICERALNTPGASVYLYGKESKPNRKVGHINIVCSSMKECDKRLQFIMGLKTDPIKHSVMEILNAEEVRKPLVGVIMGSDSDLPVMSAACKMLEQFEVPFEVTIVSAHRTPYRMNKYASEAVSRGIKVIIAGAGGAAHLPGMVAAMTPVPVIGVPVKGSTLDGVDSLHSIVQMPRGVPVATVAINNSTNAGILAVRMLGIHNYDYVKKMEEFLNKQEEEVLQKAAKLESIGYEKYLESK.

The ATP-grasp domain occupies 110–297 (KQHLVKNRIP…QFEAHLRAIL (188 aa)). 137–192 (GSSLGYPFVLKSRTLAYDGRGNFVVKSEEDIEKGLEFLANRPLYAEKWASFKKELS) contacts ATP.

The protein in the C-terminal section; belongs to the AIR carboxylase family. Class I subfamily.

It carries out the reaction 5-amino-1-(5-phospho-D-ribosyl)imidazole-4-carboxylate + H(+) = 5-amino-1-(5-phospho-beta-D-ribosyl)imidazole + CO2. The protein operates within purine metabolism; IMP biosynthesis via de novo pathway; 5-amino-1-(5-phospho-D-ribosyl)imidazole-4-carboxylate from 5-amino-1-(5-phospho-D-ribosyl)imidazole (carboxylase route): step 1/1. The sequence is that of Phosphoribosylaminoimidazole carboxylase (ADE2) from Candida glabrata (strain ATCC 2001 / BCRC 20586 / JCM 3761 / NBRC 0622 / NRRL Y-65 / CBS 138) (Yeast).